A 318-amino-acid chain; its full sequence is Putative S-adenosyl-L-methionine-dependent methyltransferase MMAR_1595 (318 aa).

Residues Glu132 and 161–162 (DL) contribute to the S-adenosyl-L-methionine site.

The protein belongs to the UPF0677 family.

Exhibits S-adenosyl-L-methionine-dependent methyltransferase activity. In Mycobacterium marinum (strain ATCC BAA-535 / M), this protein is Putative S-adenosyl-L-methionine-dependent methyltransferase MMAR_1595.